Consider the following 84-residue polypeptide: U4-theraphotoxin-Hhn1b (84 aa).

The first 22 residues, 1 to 22 (MKVTLIAILTCAAVLVLHTTAA), serve as a signal peptide directing secretion. Positions 23–47 (EELEESQLMEVGMPDTELAAVDEER) are excised as a propeptide. Disulfide bonds link Cys-51-Cys-65, Cys-55-Cys-76, and Cys-70-Cys-81.

It belongs to the neurotoxin 12 (Hwtx-2) family. 02 (Hwtx-2) subfamily. As to expression, expressed by the venom gland.

It localises to the secreted. Its function is as follows. Postsynaptic neurotoxin. This chain is U4-theraphotoxin-Hhn1b, found in Cyriopagopus hainanus (Chinese bird spider).